The sequence spans 335 residues: MAAPIGVPLLVRGGCQRILSSPLNHIYLHKRSGSQQRRHFFFWRQRDISHSVVSPAAVSPAHPVPKRIKKPDYVTTGIVPDWGDSIEVKDEDQIQGLREACRLARHVLLLAGKSLKVDMTTEEIDALVHWEIIRHDAYPSPLGYGRFPKSVCTSVNNVLCHGIPDSRPLQDGDIINIDVTVYYNGYHGDTSETFLVGNVDESGKKLVEVARRCRDEAIAACRAGAPFSVIGNTISRITHQNGLQVCPHFVGHGIGSYFHGHPEIWHHANDNDLPMEEGMAFTIEPIITEGSPEFKVLEDAWTVVSLDNQRSAQFEHTVLITPRGVEILTKLPQEA.

The transit peptide at 1–19 directs the protein to the mitochondrion; sequence MAAPIGVPLLVRGGCQRIL. His-161 provides a ligand contact to substrate. A divalent metal cation is bound by residues Asp-178, Asp-189, and His-252. His-259 lines the substrate pocket. A divalent metal cation is bound by residues Glu-284 and Glu-315.

The protein belongs to the peptidase M24A family. Methionine aminopeptidase type 1 subfamily. It depends on Co(2+) as a cofactor. The cofactor is Zn(2+). Requires Mn(2+) as cofactor. Fe(2+) is required as a cofactor.

The protein resides in the mitochondrion. It carries out the reaction Release of N-terminal amino acids, preferentially methionine, from peptides and arylamides.. Functionally, removes the N-terminal methionine from nascent proteins. The N-terminal methionine is often cleaved when the second residue in the primary sequence is small and uncharged (Met-Ala-, Cys, Gly, Pro, Ser, Thr, or Val). Requires deformylation of the N(alpha)-formylated initiator methionine before it can be hydrolyzed. This chain is Methionine aminopeptidase 1D, mitochondrial (Metap1d), found in Mus musculus (Mouse).